Here is a 66-residue protein sequence, read N- to C-terminus: Large ribosomal subunit protein bL35 (66 aa).

2 stretches are compositionally biased toward basic residues: residues 1 to 16 (MPKMKTHRGAAKRVKR) and 38 to 49 (TKQKRQLRKARL). The interval 1 to 49 (MPKMKTHRGAAKRVKRTASGQLKRSRAFTSHLFANKSTKQKRQLRKARL) is disordered.

This sequence belongs to the bacterial ribosomal protein bL35 family.

The sequence is that of Large ribosomal subunit protein bL35 from Staphylococcus aureus (strain MSSA476).